The chain runs to 353 residues: Peptide chain release factor 1 (353 aa).

Gln230 carries the N5-methylglutamine modification.

The protein belongs to the prokaryotic/mitochondrial release factor family. Post-translationally, methylated by PrmC. Methylation increases the termination efficiency of RF1.

Its subcellular location is the cytoplasm. Functionally, peptide chain release factor 1 directs the termination of translation in response to the peptide chain termination codons UAG and UAA. The sequence is that of Peptide chain release factor 1 from Leptospira biflexa serovar Patoc (strain Patoc 1 / ATCC 23582 / Paris).